A 403-amino-acid chain; its full sequence is uncharacterized protein (403 aa).

Residues 1–26 (MYKFKTNLFLVIYFIAIFSIESSISS) form the signal peptide. The Extracellular portion of the chain corresponds to 27-381 (FNTEINSNSN…DSDNSSFGIS (355 aa)). Asn-58, Asn-90, Asn-93, Asn-124, Asn-137, Asn-371, and Asn-375 each carry an N-linked (GlcNAc...) asparagine glycan. The helical transmembrane segment at 382 to 402 (IQKYLNSFLNSFIIILIINII) threads the bilayer. Residue Ile-403 is a topological domain, cytoplasmic.

The protein localises to the membrane. This is an uncharacterized protein from Dictyostelium discoideum (Social amoeba).